We begin with the raw amino-acid sequence, 444 residues long: Na(+)/H(+) antiporter NhaA 2 (444 aa).

A run of 11 helical transmembrane segments spans residues 21–41 (FSGI…NSPF), 64–84 (FSIH…MVGL), 102–122 (AFPV…YYVL), 131–151 (GFGI…LLLG), 160–180 (VFLV…IAVF), 185–205 (EGLH…LTGI), 212–232 (HLGV…HSGI), 307–327 (ALQP…NAGV), 342–362 (LGVI…LTFL), 377–397 (WSHI…SMFV), and 413–433 (IAIL…LIIN).

Belongs to the NhaA Na(+)/H(+) (TC 2.A.33) antiporter family.

The protein localises to the cell inner membrane. It carries out the reaction Na(+)(in) + 2 H(+)(out) = Na(+)(out) + 2 H(+)(in). Functionally, na(+)/H(+) antiporter that extrudes sodium in exchange for external protons. The sequence is that of Na(+)/H(+) antiporter NhaA 2 from Helicobacter hepaticus (strain ATCC 51449 / 3B1).